The chain runs to 464 residues: Light-independent protochlorophyllide reductase subunit N (464 aa).

[4Fe-4S] cluster contacts are provided by C29, C54, and C114.

The protein belongs to the BchN/ChlN family. As to quaternary structure, protochlorophyllide reductase is composed of three subunits; ChlL, ChlN and ChlB. Forms a heterotetramer of two ChlB and two ChlN subunits. Requires [4Fe-4S] cluster as cofactor.

Its subcellular location is the plastid. It is found in the chloroplast. The enzyme catalyses chlorophyllide a + oxidized 2[4Fe-4S]-[ferredoxin] + 2 ADP + 2 phosphate = protochlorophyllide a + reduced 2[4Fe-4S]-[ferredoxin] + 2 ATP + 2 H2O. It participates in porphyrin-containing compound metabolism; chlorophyll biosynthesis (light-independent). Its function is as follows. Component of the dark-operative protochlorophyllide reductase (DPOR) that uses Mg-ATP and reduced ferredoxin to reduce ring D of protochlorophyllide (Pchlide) to form chlorophyllide a (Chlide). This reaction is light-independent. The NB-protein (ChlN-ChlB) is the catalytic component of the complex. The sequence is that of Light-independent protochlorophyllide reductase subunit N from Stigeoclonium helveticum (Green alga).